Reading from the N-terminus, the 821-residue chain is Protein EFR3 homolog A (821 aa).

Phosphoserine is present on residues S360, S363, S422, and S694.

It belongs to the EFR3 family. As to quaternary structure, component of a phosphatidylinositol 4-kinase (PI4K) complex, composed of PI4KA, EFR3 (EFR3A or EFR3B), TTC7 (TTC7A or TTC7B) and HYCC (HYCC1 or HYCC2). Post-translationally, palmitoylated at its N-terminus, anchoring the protein to the plasma membrane.

It is found in the cell membrane. The protein resides in the cytoplasm. It localises to the cytosol. Component of a complex required to localize phosphatidylinositol 4-kinase (PI4K) to the plasma membrane. The complex acts as a regulator of phosphatidylinositol 4-phosphate (PtdIns(4)P) synthesis. In the complex, EFR3A probably acts as the membrane-anchoring component. Also involved in responsiveness to G-protein-coupled receptors; it is however unclear whether this role is direct or indirect. The protein is Protein EFR3 homolog A of Homo sapiens (Human).